Consider the following 228-residue polypeptide: Eukaryotic translation initiation factor 4E-2 (228 aa).

A disulfide bridge links Cys130 with Cys134.

Belongs to the eukaryotic initiation factor 4E family. In terms of assembly, eIF4F is a multi-subunit complex, the composition of which varies with external and internal environmental conditions. It is composed of at least eIF4A, eIF4E and eIF4G. eIF4E is also known to interact with other partners. As to expression, highly expressed in all somatic tissues.

Its function is as follows. Recognizes and binds the 7-methylguanosine-containing mRNA cap during an early step in the initiation of protein synthesis and facilitates ribosome binding by inducing the unwinding of the mRNAs secondary structures. All 5 eIF4E proteins bind monomethyl cap structures. Only ife-1, ife-2 and ife-5 bind trimethyl cap structures which result from trans-splicing. Translation of trimethyl cap structure mRNAs may be regulated by intracellular redox state; disulfide bonds change the width and depth of the cap-binding cavity determining selectivity to mRNA caps. Probably by regulating mRNA translation in somatic cells, negatively regulates lifespan independently of daf-2/insulin and let-363/TOR pathways. Negatively regulates resistance to oxidative stress. May play a role in embryonic development. The chain is Eukaryotic translation initiation factor 4E-2 (ife-2) from Caenorhabditis elegans.